A 130-amino-acid chain; its full sequence is Small ribosomal subunit protein uS9 (130 aa).

Belongs to the universal ribosomal protein uS9 family.

This Paracidovorax citrulli (strain AAC00-1) (Acidovorax citrulli) protein is Small ribosomal subunit protein uS9.